A 359-amino-acid polypeptide reads, in one-letter code: 4-galactosyl-N-acetylglucosaminide 3-alpha-L-fucosyltransferase 9 (359 aa).

The Cytoplasmic segment spans residues 1-11; that stretch reads MTSTSKGILRP. The helical; Signal-anchor for type II membrane protein transmembrane segment at 12 to 32 threads the bilayer; sequence FLIVCIILGCFMACLLIYIKP. Topologically, residues 33-359 are lumenal; it reads TNSWIFSPME…VGNLEKWFWN (327 aa). Asn62 carries an N-linked (GlcNAc...) asparagine glycan. An acceptor-binding region spans residues 63-168; sequence ETTILVWVWP…RRDSDIQVPY (106 aa). Gln75 serves as a coordination point for a beta-D-galactosyl-(1-&gt;4)-N-acetyl-beta-D-glucosaminyl derivative. Cystine bridges form between Cys82–Cys335, Cys91–Cys338, and Cys190–Cys238. Asn101 is a glycosylation site (N-linked (GlcNAc...) asparagine). Glu137 serves as a coordination point for a beta-D-galactosyl-(1-&gt;4)-N-acetyl-beta-D-glucosaminyl derivative. Glu137 (nucleophile) is an active-site residue. Residue Glu137 participates in GDP-beta-L-fucose binding. The N-linked (GlcNAc...) asparagine glycan is linked to Asn153. Residues Tyr168, Val192, Ser194, Asn195, Arg202, Val226, Tyr241, Asn246, Tyr252, Glu255, and Lys256 each coordinate GDP-beta-L-fucose. Residues 169–326 are donor-binding; the sequence is GFLTVSTNPF…NWRKDFTVNL (158 aa). The interval 327 to 359 is acceptor-binding; sequence PRFWESHACLACDHVKRHQEYKSVGNLEKWFWN.

It belongs to the glycosyltransferase 10 family. As to quaternary structure, homodimer. N-glycosylated with complex-type N-glycans. The glycan alpha-D-Man-(1-&gt;3)-beta-D-Man-(1-&gt;4)-GlcNAc-(1-&gt;4)-GlcNAc is attached at Asn-153. As to expression, strongly expressed in forebrain and stomach, lower expression in spleen and peripheral blood leukocytes, and no expression in small intestine, colon, liver, lung, kidney, adrenal cortex or uterus. Highly expressed in granulocytes. Not expressed in monocytes.

It is found in the golgi apparatus. It localises to the trans-Golgi network membrane. The protein resides in the golgi apparatus membrane. The enzyme catalyses a beta-D-galactosyl-(1-&gt;4)-N-acetyl-beta-D-glucosaminyl derivative + GDP-beta-L-fucose = a beta-D-galactosyl-(1-&gt;4)-[alpha-L-fucosyl-(1-&gt;3)]-N-acetyl-beta-D-glucosaminyl derivative + GDP + H(+). It carries out the reaction an alpha-Neu5Ac-(2-&gt;3)-beta-D-Gal-(1-&gt;4)-beta-D-GlcNAc-(1-&gt;3)-beta-D-Gal-(1-&gt;4)-beta-D-GlcNAc derivative + GDP-beta-L-fucose = an alpha-Neu5Ac-(2-&gt;3)-beta-D-Gal-(1-&gt;4)-beta-D-GlcNAc-(1-&gt;3)-beta-D-Gal-(1-&gt;4)-[alpha-L-Fuc-(1-&gt;3)]-beta-D-GlcNAc derivative + GDP + H(+). The catalysed reaction is alpha-N-glycoloylneuraminosyl-(2-&gt;3)-beta-D-galactosyl-(1-&gt;4)-N-acetyl-beta-D-glucosaminyl-(1-&gt;3)-beta-D-galactosyl-(1-&gt;4)-N-acetyl-beta-D-glucosaminyl-(1-&gt;3)-beta-D-galactosyl-(1-&gt;4)-beta-D-glucosyl-(1&lt;-&gt;1')-ceramide + GDP-beta-L-fucose = alpha-N-glycoloylneuraminosyl-(2-&gt;3)-beta-D-galactosyl-(1-&gt;4)-N-acetyl-beta-D-glucosaminyl-(1-&gt;3)-beta-D-galactosyl-(1-&gt;4)-[alpha-L-fucosyl-(1-&gt;3)]-N-acetyl-beta-D-glucosaminyl-(1-&gt;3)-beta-D-galactosyl-(1-&gt;4)-beta-D-glucosyl-(1&lt;-&gt;1')-ceramide + GDP + H(+). It catalyses the reaction alpha-D-galactosyl-(1-&gt;3)-beta-D-galactosyl-(1-&gt;4)-N-acetyl-beta-D-glucosaminyl-(1-&gt;3)-beta-D-galactosyl-(1-&gt;4)-beta-D-glucosyl-(1&lt;-&gt;1')-ceramide + GDP-beta-L-fucose = a neolactoside IV(3)-alpha-Gal,III(3)-alpha-Fuc-nLc4Cer + GDP + H(+). The enzyme catalyses a neolactoside nLc4Cer + GDP-beta-L-fucose = a neolactoside III(3)-alpha-Fuc-nLc4Cer + GDP + H(+). It carries out the reaction an N-acetyl-alpha-neuraminyl-(2-&gt;3)-beta-D-galactosyl-(1-&gt;4)-N-acetyl-beta-D-glucosaminyl derivative + GDP-beta-L-fucose = an alpha-Neu5Ac-(2-&gt;3)-beta-D-Gal-(1-&gt;4)-[alpha-L-Fuc-(1-&gt;3)]-beta-D-GlcNAc derivative + GDP + H(+). The catalysed reaction is beta-D-Gal-(1-&gt;4)-beta-D-GlcNAc-(1-&gt;3)-beta-D-Gal-(1-&gt;4)-D-Glc + GDP-beta-L-fucose = beta-D-Gal-(1-&gt;4)-[alpha-L-Fuc-(1-&gt;3)]-beta-D-GlcNAc-(1-&gt;3)-beta-D-Gal-(1-&gt;4)-D-Glc + GDP + H(+). It catalyses the reaction an alpha-L-Fuc-(1-&gt;2)-beta-D-Gal-(1-&gt;4)-beta-D-GlcNAc derivative + GDP-beta-L-fucose = an alpha-L-Fuc-(1-&gt;2)-beta-D-Gal-(1-&gt;4)-[alpha-L-Fuc-(1-&gt;3)]-beta-D-GlcNAc derivative + GDP + H(+). The protein operates within protein modification; protein glycosylation. It functions in the pathway glycolipid biosynthesis. Activated by Mn2+. Catalyzes alpha(1-&gt;3) linkage of fucosyl moiety transferred from GDP-beta-L-fucose to N-acetyl glucosamine (GlcNAc) within type 2 lactosamine (LacNAc, beta-D-Gal-(1-&gt;4)-beta-D-GlcNAc-) glycan attached to glycolipids and N- or O-linked glycoproteins. Fucosylates distal type 2 LacNAc and its fucosylated (H-type 2 LacNAc) and sialylated (sialyl-type 2 LacNAc) derivatives to form Lewis x (Lex) (CD15) and Lewis y (Ley) antigenic epitopes involved in cell adhesion and differentiation. Generates Lex epitopes in the brain, presumably playing a role in the maintenance of neuronal stemness and neurite outgrowth in progenitor neural cells. Fucosylates the internal type 2 LacNAc unit of the polylactosamine chain to form VIM-2 antigen that serves as recognition epitope for SELE. Can also modify milk oligosaccharides, in particular type 2 tetrasaccharide LNnT. The polypeptide is 4-galactosyl-N-acetylglucosaminide 3-alpha-L-fucosyltransferase 9 (Homo sapiens (Human)).